A 271-amino-acid polypeptide reads, in one-letter code: Zinc finger protein 501 (271 aa).

C2H2-type zinc fingers lie at residues 22-44 (SKCSECGKFFTQRSSLTQHQRIH), 50-72 (YVCSECGSCFRKQSNLTQHLRIH), 78-100 (YKCNECEKAFQTKAILVQHLRIH), 106-128 (YKCNECGKAFCQSPSLIKHQRIH), 134-156 (YKCTECGKAFSQSICLTRHQRSH), 162-184 (FKCNECGKAFNQSACLMQHQRIH), 190-212 (YTCTECGKAFTQNSSLVEHERTH), 218-240 (YKCSECEKTFRKQAHLSEHYRIH), and 246-268 (YECVGCGKSFRHSSALLRHQRLH).

It belongs to the krueppel C2H2-type zinc-finger protein family.

The protein localises to the nucleus. Its subcellular location is the nucleolus. Functionally, may be involved in transcriptional regulation. Essential for Golgi structural integrity. This chain is Zinc finger protein 501 (ZNF501), found in Homo sapiens (Human).